Consider the following 269-residue polypeptide: 4-hydroxy-tetrahydrodipicolinate reductase (269 aa).

NAD(+) is bound by residues Gly8–Met13 and Glu34. Arg35 contacts NADP(+). Residues Gly98–Thr100 and Ala122–Tyr125 each bind NAD(+). Catalysis depends on His155, which acts as the Proton donor/acceptor. His156 contributes to the (S)-2,3,4,5-tetrahydrodipicolinate binding site. Residue Lys159 is the Proton donor of the active site. A (S)-2,3,4,5-tetrahydrodipicolinate-binding site is contributed by Gly165–Thr166.

The protein belongs to the DapB family.

The protein resides in the cytoplasm. The enzyme catalyses (S)-2,3,4,5-tetrahydrodipicolinate + NAD(+) + H2O = (2S,4S)-4-hydroxy-2,3,4,5-tetrahydrodipicolinate + NADH + H(+). It carries out the reaction (S)-2,3,4,5-tetrahydrodipicolinate + NADP(+) + H2O = (2S,4S)-4-hydroxy-2,3,4,5-tetrahydrodipicolinate + NADPH + H(+). Its pathway is amino-acid biosynthesis; L-lysine biosynthesis via DAP pathway; (S)-tetrahydrodipicolinate from L-aspartate: step 4/4. Its function is as follows. Catalyzes the conversion of 4-hydroxy-tetrahydrodipicolinate (HTPA) to tetrahydrodipicolinate. The chain is 4-hydroxy-tetrahydrodipicolinate reductase from Vibrio cholerae serotype O1 (strain ATCC 39315 / El Tor Inaba N16961).